The sequence spans 943 residues: MARGSALPRRPLLCIPAVWAAAALLLSVSRTSGEVEVLDPNDPLGPLDGQDGPIPTLKGYFLNFLEPVNNITIVQGQTAILHCKVAGNPPPNVRWLKNDAPVVQEPRRIIIRKTEYGSRLRIQDLDTTDTGYYQCVATNGMKTITATGVLFVRLGPTHSPNHNFQDDYHEDGFCQPYRGIACARFIGNRTIYVDSLQMQGEIENRITAAFTMIGTSTHLSDQCSQFAIPSFCHFVFPLCDARSRTPKPRELCRDECEVLESDLCRQEYTIARSNPLILMRLQLPKCEALPMPESPDAANCMRIGIPAERLGRYHQCYNGSGMDYRGTASTTKSGHQCQPWALQHPHSHHLSSTDFPELGGGHAYCRNPGGQMEGPWCFTQNKNVRMELCDVPSCSPRDSSKMGILYILVPSIAIPLVIACLFFLVCMCRNKQKASASTPQRRQLMASPSQDMEMPLINQHKQAKLKEISLSAVRFMEELGEDRFGKVYKGHLFGPAPGEQTQAVAIKTLKDKAEGPLREEFRHEAMLRARLQHPNVVCLLGVVTKDQPLSMIFSYCSHGDLHEFLVMRSPHSDVGSTDDDRTVKSALEPPDFVHLVAQIAAGMEYLSSHHVVHKDLATRNVLVYDKLNVKISDLGLFREVYAADYYKLLGNSLLPIRWMAPEAIMYGKFSIDSDIWSYGVVLWEVFSYGLQPYCGYSNQDVVEMIRNRQVLPCPDDCPAWVYALMIECWNEFPSRRPRFKDIHSRLRAWGNLSNYNSSAQTSGASNTTQTSSLSTSPVSNVSNARYVGPKQKAPPFPQPQFIPMKGQIRPMVPPPQLYVPVNGYQPVPAYGAYLPNFYPVQIPMQMAPQQVPPQMVPKPSSHHSGSGSTSTGYVTTAPSNTSMADRAALLSEGADDTQNAPEDGAQSTVQEAEEEEEGSVPETELLGDCDTLQVDEAQVQLEA.

An N-terminal signal peptide occupies residues Met1–Gly33. At Glu34–Gly403 the chain is on the extracellular side. An Ig-like C2-type domain is found at Pro55–Thr145. Asn70 carries an N-linked (GlcNAc...) asparagine glycan. 9 cysteine pairs are disulfide-bonded: Cys83–Cys135, Cys174–Cys239, Cys182–Cys232, Cys223–Cys264, Cys252–Cys300, Cys256–Cys286, Cys316–Cys394, Cys337–Cys377, and Cys365–Cys389. An FZ domain is found at His169–Ile303. A glycan (N-linked (GlcNAc...) asparagine) is linked at Asn188. The Kringle domain maps to Cys316–Cys394. Asn318 is a glycosylation site (N-linked (GlcNAc...) asparagine). A helical membrane pass occupies residues Ile404 to Leu424. The Cytoplasmic portion of the chain corresponds to Val425–Ala943. Sulfoserine; partial occurs at positions 469 and 471. Positions Val473–Leu746 constitute a Protein kinase domain. Residues Leu479 to Val487 and Lys507 each bind ATP. Residue Asp615 is the Proton acceptor of the active site. Tyr646 bears the Phosphotyrosine; by autocatalysis mark. Disordered regions lie at residues Ser757 to Phe796 and Gln850 to Thr931. Low complexity-rich tracts occupy residues Ser765–Gln791 and Pro857–Gly872. The residue at position 785 (Arg785) is an Asymmetric dimethylarginine. Over residues Tyr873 to Met883 the composition is skewed to polar residues.

Belongs to the protein kinase superfamily. Tyr protein kinase family. ROR subfamily. Homodimer; promotes osteogenesis. Binds YWHAB. Interacts with WTIP. Interacts with ROR2. Mg(2+) serves as cofactor.

It is found in the cell membrane. The enzyme catalyses L-tyrosyl-[protein] + ATP = O-phospho-L-tyrosyl-[protein] + ADP + H(+). Functionally, tyrosine-protein kinase receptor which may be involved in the early formation of the chondrocytes. It seems to be required for cartilage and growth plate development. Phosphorylates YWHAB, leading to induction of osteogenesis and bone formation. In contrast, has also been shown to have very little tyrosine kinase activity in vitro. May act as a receptor for wnt ligand WNT5A which may result in the inhibition of WNT3A-mediated signaling. This Homo sapiens (Human) protein is Tyrosine-protein kinase transmembrane receptor ROR2 (ROR2).